The chain runs to 702 residues: Ribosomal RNA large subunit methyltransferase K/L (702 aa).

Positions 43-154 constitute a THUMP domain; it reads LVYQSLMWSR…KETASIALDL (112 aa).

It belongs to the methyltransferase superfamily. RlmKL family.

Its subcellular location is the cytoplasm. It catalyses the reaction guanosine(2445) in 23S rRNA + S-adenosyl-L-methionine = N(2)-methylguanosine(2445) in 23S rRNA + S-adenosyl-L-homocysteine + H(+). The catalysed reaction is guanosine(2069) in 23S rRNA + S-adenosyl-L-methionine = N(2)-methylguanosine(2069) in 23S rRNA + S-adenosyl-L-homocysteine + H(+). Its function is as follows. Specifically methylates the guanine in position 2445 (m2G2445) and the guanine in position 2069 (m7G2069) of 23S rRNA. In Escherichia coli O139:H28 (strain E24377A / ETEC), this protein is Ribosomal RNA large subunit methyltransferase K/L.